The sequence spans 334 residues: Glyceraldehyde-3-phosphate dehydrogenase 2 (334 aa).

Residues 12–13 (RI), aspartate 35, and arginine 79 contribute to the NAD(+) site. Residues 152–154 (SCT), threonine 183, arginine 198, 211–212 (SG), and arginine 234 contribute to the D-glyceraldehyde 3-phosphate site. The active-site Nucleophile is cysteine 153. NAD(+) is bound at residue asparagine 315.

Belongs to the glyceraldehyde-3-phosphate dehydrogenase family. In terms of assembly, homotetramer.

Its subcellular location is the cytoplasm. The catalysed reaction is D-glyceraldehyde 3-phosphate + phosphate + NAD(+) = (2R)-3-phospho-glyceroyl phosphate + NADH + H(+). The protein operates within carbohydrate degradation; glycolysis; pyruvate from D-glyceraldehyde 3-phosphate: step 1/5. Its activity is regulated as follows. Inhibited by pentalenolactone (PL). Catalyzes the oxidative phosphorylation of glyceraldehyde 3-phosphate (G3P) to 1,3-bisphosphoglycerate (BPG) using the cofactor NAD. The first reaction step involves the formation of a hemiacetal intermediate between G3P and a cysteine residue, and this hemiacetal intermediate is then oxidized to a thioester, with concomitant reduction of NAD to NADH. The reduced NADH is then exchanged with the second NAD, and the thioester is attacked by a nucleophilic inorganic phosphate to produce BPG. The sequence is that of Glyceraldehyde-3-phosphate dehydrogenase 2 (gap2) from Streptomyces arenae.